The sequence spans 371 residues: Macronuclear solute carrier homolog CR-MSC (371 aa).

Solcar repeat units lie at residues 16–111, 120–208, and 215–304; these read RMNY…FYDK, ARPD…CKEN, and PHWI…LSQF. The next 6 membrane-spanning stretches (helical) occupy residues 22-42, 89-109, 126-146, 184-204, 221-241, and 281-301; these read FAAA…LDMV, TFFF…GYFY, VAAG…IDIV, AGAN…IYDW, LWGT…FDMI, and FGSF…ICYL.

It belongs to the mitochondrial carrier (TC 2.A.29) family.

Its subcellular location is the membrane. This Oxytricha fallax protein is Macronuclear solute carrier homolog CR-MSC.